Here is a 130-residue protein sequence, read N- to C-terminus: MYRATTRKIQVTATPRYVAERSEPDQGRHFWAYTIEVVNLGKVSVQLKSRHWVITDAHGHVEEVHGAGVVGEEPVLPPGGRFEYTSGVPLSTPTGIMSGHYDMLAETGETFSVEVPAFSLDVPHMARILN.

Residues 3–127 enclose the ApaG domain; the sequence is RATTRKIQVT…FSLDVPHMAR (125 aa).

This chain is Protein ApaG, found in Azorhizobium caulinodans (strain ATCC 43989 / DSM 5975 / JCM 20966 / LMG 6465 / NBRC 14845 / NCIMB 13405 / ORS 571).